We begin with the raw amino-acid sequence, 415 residues long: Transfer protein TraSA (415 aa).

Residues 127–326 (DGAVHYRDYR…HRVNDETSAN (200 aa)) enclose the FtsK domain. 145–152 (GATESGKS) is a binding site for ATP.

This Streptomyces ambofaciens protein is Transfer protein TraSA (traSA).